An 894-amino-acid chain; its full sequence is Microsomal triglyceride transfer protein large subunit (894 aa).

Positions 1-18 are cleaved as a signal peptide; that stretch reads MILLAVLFLCFISSYSAS. The Vitellogenin domain occupies 28 to 659; sequence LNNDRLYKLT…IFQYIGKAGL (632 aa). Residues cysteine 174 and cysteine 194 are joined by a disulfide bond.

In terms of assembly, heterodimer; heterodimerizes with the protein disulfide isomerase (P4HB/PDI). Interacts with APOB. Interacts with PRAP1. As to expression, liver and small intestine. Also found in ovary, testis and kidney.

The protein resides in the endoplasmic reticulum. It localises to the golgi apparatus. It carries out the reaction a 1,2-diacyl-sn-glycero-3-phosphocholine(in) = a 1,2-diacyl-sn-glycero-3-phosphocholine(out). The catalysed reaction is a 1,2-diacyl-sn-glycero-3-phosphoethanolamine(in) = a 1,2-diacyl-sn-glycero-3-phosphoethanolamine(out). The enzyme catalyses a cholesterol ester(in) = a cholesterol ester(out). It catalyses the reaction a triacyl-sn-glycerol(in) = a triacyl-sn-glycerol(out). Catalyzes the transport of triglyceride, cholesteryl ester, and phospholipid between phospholipid surfaces. Required for the assembly and secretion of plasma lipoproteins that contain apolipoprotein B. May be involved in regulating cholesteryl ester biosynthesis in cells that produce lipoproteins. This Homo sapiens (Human) protein is Microsomal triglyceride transfer protein large subunit (MTTP).